A 63-amino-acid polypeptide reads, in one-letter code: Alpha-toxin CsE5 (63 aa).

In terms of domain architecture, LCN-type CS-alpha/beta spans 2-61 (KDGYPVDSGNCKYECLKDDYCNDLCLERKADKGYCYWGKVSCYCYGLPDNSPTKTSGKCN). Intrachain disulfides connect Cys-12/Cys-60, Cys-16/Cys-36, Cys-22/Cys-43, and Cys-26/Cys-45.

Belongs to the long (4 C-C) scorpion toxin superfamily. Sodium channel inhibitor family. Alpha subfamily. In terms of tissue distribution, expressed by the venom gland.

Its subcellular location is the secreted. Alpha toxins bind voltage-independently at site-3 of sodium channels (Nav) and inhibit the inactivation of the activated channels, thereby blocking neuronal transmission. The chain is Alpha-toxin CsE5 from Centruroides sculpturatus (Arizona bark scorpion).